The primary structure comprises 98 residues: Cytochrome c2 (98 aa).

A Pyrrolidone carboxylic acid modification is found at Q1. C10, C13, H14, and M76 together coordinate heme c.

Belongs to the cytochrome c family. In terms of processing, binds 1 heme c group covalently per subunit.

It is found in the periplasm. In terms of biological role, cytochrome c2 is found mainly in purple, non-sulfur, photosynthetic bacteria where it functions as the electron donor to the oxidized bacteriochlorophyll in the photophosphorylation pathway. However, it may also have a role in the respiratory chain and is found in some non-photosynthetic bacteria. The polypeptide is Cytochrome c2 (Rhodoplanes tepidamans (Rhodoplanes cryptolactis)).